The sequence spans 963 residues: Ubiquitin carboxyl-terminal hydrolase 4 (963 aa).

The DUSP domain occupies 11–122 (PDAETQKSEL…GQQPIVRKVV (112 aa)). The interval 27-216 (TLQRGAQWYL…LYLGQVLVIE (190 aa)) is necessary for interaction with SART3. Residues 133-141 (VEVYLLELK) carry the Nuclear export signal motif. A Ubiquitin-like 1 domain is found at 142–226 (LCENSDPTNV…PQNEDGTWPR (85 aa)). Residues 220-255 (EDGTWPRQTLQSKSSTAPSRNFTTSPKSSASPYSSV) are disordered. The span at 225–243 (PRQTLQSKSSTAPSRNFTT) shows a compositional bias: polar residues. The tract at residues 229-295 (LQSKSSTAPS…SYNCQEPPSS (67 aa)) is required for USP4 activation by providing conformational flexibility between the DUSP and catalytic domains. Over residues 244–255 (SPKSSASPYSSV) the composition is skewed to low complexity. In terms of domain architecture, USP spans 302–923 (CGLGNLGNTC…AAYVLFYQRR (622 aa)). Catalysis depends on C311, which acts as the Nucleophile. The tract at residues 384–386 (PQF) is regulates ubiquitin dissociation. The interval 405 to 407 (LHE) is necessary for interaction with RBL2. A Phosphoserine modification is found at S445. Positions 459–463 (LVCPE) are necessary for interaction with RB1 and RBL2. The Zn(2+) site is built by C461 and C464. Residues 483 to 571 (LKKDRVMEVF…IFVYEVCSTS (89 aa)) enclose the Ubiquitin-like 2 domain. An interacts with DUSP and ubiquitin-like 1 domains and is required for USP4 activation region spans residues 485 to 775 (KDRVMEVFLV…LQPQKKKKTT (291 aa)). The segment at 637–698 (DEFGSSPLEP…PSETTQKKIK (62 aa)) is disordered. S655 carries the post-translational modification Phosphoserine. The span at 657-666 (EGEDEEEMEH) shows a compositional bias: acidic residues. Phosphoserine is present on residues S675 and S680. The Nuclear localization signal motif lies at 767–772 (QPQKKK). 2 residues coordinate Zn(2+): C799 and C802. H881 serves as the catalytic Proton acceptor. The tract at residues 928 to 963 (YKTPSLSSSGSSDGGTRPSSSQQGLGDDEACSMDTN) is disordered. Low complexity predominate over residues 932 to 948 (SLSSSGSSDGGTRPSSS). Residues 953–963 (GDDEACSMDTN) show a composition bias toward acidic residues.

It belongs to the peptidase C19 family. USP4 subfamily. Interacts with RB1 (both dephosphorylated and hypophosphorylated forms). Interacts with RBL1 and RBL2. Interacts with ADORA2A (via cytoplasmic C-terminus); the interaction is direct. Interacts with SART3; recruits USP4 to its substrate PRPF3. Post-translationally, phosphorylated at Ser-445 by PKB/AKT1 in response to EGF stimulus, promoting its ability deubiquitinate RHEB. Monoubiquitinated by TRIM21. Ubiquitination does not lead to its proteasomal degradation. Autodeubiquitinated.

The protein localises to the cytoplasm. The protein resides in the nucleus. The enzyme catalyses Thiol-dependent hydrolysis of ester, thioester, amide, peptide and isopeptide bonds formed by the C-terminal Gly of ubiquitin (a 76-residue protein attached to proteins as an intracellular targeting signal).. The completion of the deubiquitinase reaction is mediated by the DUSP and ubiquitin-like 1 domains which promotes the release of ubiquitin from the catalytic site enabling subsequent reactions to occur. Its function is as follows. Deubiquitinating enzyme that removes conjugated ubiquitin from target proteins. Deubiquitinates PDPK1. Deubiquitinates TRIM21. Deubiquitinates receptor ADORA2A which increases the amount of functional receptor at the cell surface. Deubiquitinates HAS2. Deubiquitinates RHEB in response to EGF signaling, promoting mTORC1 signaling. May regulate mRNA splicing through deubiquitination of the U4 spliceosomal protein PRPF3. This may prevent its recognition by the U5 component PRPF8 thereby destabilizing interactions within the U4/U6.U5 snRNP. May also play a role in the regulation of quality control in the ER. In Pongo abelii (Sumatran orangutan), this protein is Ubiquitin carboxyl-terminal hydrolase 4 (USP4).